Reading from the N-terminus, the 456-residue chain is UPF0496 protein 4 (456 aa).

Residues 205 to 221 traverse the membrane as a helical segment; sequence SVTVFVCSIFVAVLSGS.

Belongs to the ROH1 family.

The protein resides in the membrane. The polypeptide is UPF0496 protein 4 (Oryza sativa subsp. indica (Rice)).